The following is a 281-amino-acid chain: Shikimate dehydrogenase (NADP(+)) (281 aa).

Residues 20 to 22 (SRS) and threonine 67 each bind shikimate. Lysine 71 functions as the Proton acceptor in the catalytic mechanism. Aspartate 83 serves as a coordination point for NADP(+). Asparagine 92 and aspartate 108 together coordinate shikimate. NADP(+) is bound by residues 133–137 (GAGGA), 157–162 (NRTEAR), and methionine 225. Tyrosine 227 contributes to the shikimate binding site. Glycine 248 serves as a coordination point for NADP(+).

The protein belongs to the shikimate dehydrogenase family. In terms of assembly, homodimer.

The enzyme catalyses shikimate + NADP(+) = 3-dehydroshikimate + NADPH + H(+). It participates in metabolic intermediate biosynthesis; chorismate biosynthesis; chorismate from D-erythrose 4-phosphate and phosphoenolpyruvate: step 4/7. Its function is as follows. Involved in the biosynthesis of the chorismate, which leads to the biosynthesis of aromatic amino acids. Catalyzes the reversible NADPH linked reduction of 3-dehydroshikimate (DHSA) to yield shikimate (SA). In Paracidovorax citrulli (strain AAC00-1) (Acidovorax citrulli), this protein is Shikimate dehydrogenase (NADP(+)).